Reading from the N-terminus, the 107-residue chain is Insulin-like peptide 6 (107 aa).

The N-terminal stretch at 1 to 33 (MVLKVPTSKVLLVLATLFAVAAMISSWMPQVAA) is a signal peptide. Cystine bridges form between Cys48–Cys91, Cys60–Cys105, and Cys90–Cys96. Positions 67–76 (LGDVFPNSFG) are cleaved as a propeptide — connecting peptide.

It belongs to the insulin family. In terms of assembly, heterodimer of a B chain and an A chain linked by two disulfide bonds. In terms of tissue distribution, expressed at a low level in the larval gut.

Its subcellular location is the secreted. Functionally, possible ligand of InR/insulin-like receptor. This chain is Insulin-like peptide 6, found in Drosophila melanogaster (Fruit fly).